The following is a 332-amino-acid chain: Phosphate acyltransferase (332 aa).

This sequence belongs to the PlsX family. As to quaternary structure, homodimer. Probably interacts with PlsY.

Its subcellular location is the cytoplasm. It carries out the reaction a fatty acyl-[ACP] + phosphate = an acyl phosphate + holo-[ACP]. The protein operates within lipid metabolism; phospholipid metabolism. In terms of biological role, catalyzes the reversible formation of acyl-phosphate (acyl-PO(4)) from acyl-[acyl-carrier-protein] (acyl-ACP). This enzyme utilizes acyl-ACP as fatty acyl donor, but not acyl-CoA. The polypeptide is Phosphate acyltransferase (Bacillus pumilus (strain SAFR-032)).